Consider the following 258-residue polypeptide: Acyl-[acyl-carrier-protein]--UDP-N-acetylglucosamine O-acyltransferase (258 aa).

The protein belongs to the transferase hexapeptide repeat family. LpxA subfamily. Homotrimer.

Its subcellular location is the cytoplasm. The enzyme catalyses a (3R)-hydroxyacyl-[ACP] + UDP-N-acetyl-alpha-D-glucosamine = a UDP-3-O-[(3R)-3-hydroxyacyl]-N-acetyl-alpha-D-glucosamine + holo-[ACP]. Its pathway is glycolipid biosynthesis; lipid IV(A) biosynthesis; lipid IV(A) from (3R)-3-hydroxytetradecanoyl-[acyl-carrier-protein] and UDP-N-acetyl-alpha-D-glucosamine: step 1/6. In terms of biological role, involved in the biosynthesis of lipid A, a phosphorylated glycolipid that anchors the lipopolysaccharide to the outer membrane of the cell. The sequence is that of Acyl-[acyl-carrier-protein]--UDP-N-acetylglucosamine O-acyltransferase from Pseudomonas aeruginosa (strain LESB58).